Consider the following 136-residue polypeptide: MNVIEDFRTGEPITLHQATNSVEFESVPNPLYMKLLWFERYGPIYQLKIQIRFNYNLRRALNLHKCWIELTITGSNRILTGPRFLKVLKKRLEIYLDNLGLICINNVIRGLNHVLYEEFNFVSSVIQNQSVAMNLY.

It belongs to the geminiviridae replication enhancer protein family. Homooligomer. Interacts with the replication-associated protein (REP). Interacts with host proliferating cell nuclear antigen (PCNA). Interacts with host retinoblastoma-related protein 1 (RBR1), and may thereby deregulate the host cell cycle. Oligomerization and interaction with PCNA are necessary for optimal replication enhancement.

In terms of biological role, increases viral DNA accumulation. Enhances infectivity and symptom expression. This chain is Replication enhancer, found in Beet curly top virus (strain California/Logan) (BCTV).